The sequence spans 326 residues: tRNA-modifying protein YgfZ (326 aa).

Folate contacts are provided by tryptophan 27 and tryptophan 189.

This sequence belongs to the tRNA-modifying YgfZ family.

The protein resides in the cytoplasm. Functionally, folate-binding protein involved in regulating the level of ATP-DnaA and in the modification of some tRNAs. It is probably a key factor in regulatory networks that act via tRNA modification, such as initiation of chromosomal replication. The polypeptide is tRNA-modifying protein YgfZ (Salmonella paratyphi A (strain AKU_12601)).